A 226-amino-acid chain; its full sequence is Transmembrane 4 L6 family member 20 (226 aa).

Residues 1–14 (MTCCEGWTSCNGFS) are Lumenal-facing. The chain crosses the membrane as a helical span at residues 15–35 (LLILILLGVVINCIPLGISLV). The Cytoplasmic portion of the chain corresponds to 36–49 (EADSTSQNPISCYE). A helical membrane pass occupies residues 50 to 70 (WWFPGIIGAGLMAIPATTMSL). The Lumenal segment spans residues 71–83 (AARKRACCNNKTG). The helical transmembrane segment at 84–104 (MFLSSLFSVITVVGAVYCMLV) threads the bilayer. Topologically, residues 105–191 (SLQALLEGPL…RIFHFSVFMS (87 aa)) are cytoplasmic. Residues 192-212 (LLLVGILELLFGLSQILIGFL) traverse the membrane as a helical segment. Topologically, residues 213 to 226 (GCLCGVSQRRSQIV) are lumenal.

Belongs to the L6 tetraspanin family. Post-translationally, glycosylated at Asn-132, Asn-148 and Asn-163 in presence of ceramide which inverts the orientation of TM4SF20 in membranes exposing these residues to the endoplasmic reticulum lumen. In terms of processing, cleaved by signal peptidase at Ser-14 but the peptide does not act as a signal peptide. Cleavage is inhibited by ceramide which inverts the orientation of TM4SF20 in membranes exposing the N-terminus to the cytosol and not to the endoplasmic reticulum lumen.

The protein resides in the membrane. Its subcellular location is the endoplasmic reticulum membrane. In terms of biological role, polytopic transmembrane protein. Inhibits regulated intramembrane proteolysis (RIP) of CREB3L1, inhibiting its activation and the induction of collagen synthesis. In response to ceramide, which alters TM4SF20 membrane topology, stimulates RIP activation of CREB3L1. Ceramide reverses the direction through which transmembrane helices are translocated into the endoplasmic reticulum membrane during translation of TM4SF20, this mechanism is called 'regulated alternative translocation' (RAT) and regulates the function of the transmembrane protein. The sequence is that of Transmembrane 4 L6 family member 20 (Tm4sf20) from Mus musculus (Mouse).